Reading from the N-terminus, the 334-residue chain is Putative B3 domain-containing protein At5g66980 (334 aa).

2 DNA-binding regions (TF-B3) span residues 8–105 (LQFF…FAND) and 218–317 (HPHF…VSGR).

The protein resides in the nucleus. This Arabidopsis thaliana (Mouse-ear cress) protein is Putative B3 domain-containing protein At5g66980.